Consider the following 861-residue polypeptide: Bifunctional uridylyltransferase/uridylyl-removing enzyme (861 aa).

The tract at residues 1 to 322 (MHTAAAATPA…FPTELGITRT (322 aa)) is uridylyltransferase. Positions 323–679 (INGRFVERQG…ARISPVGEGL (357 aa)) are uridylyl-removing. In terms of domain architecture, HD spans 441-557 (VDQHILMVVR…RHFADQVGSE (117 aa)). ACT domains are found at residues 680 to 763 (QVAV…AEPP) and 792 to 861 (LLSL…ALAI).

The protein belongs to the GlnD family. Mg(2+) serves as cofactor.

It catalyses the reaction [protein-PII]-L-tyrosine + UTP = [protein-PII]-uridylyl-L-tyrosine + diphosphate. The catalysed reaction is [protein-PII]-uridylyl-L-tyrosine + H2O = [protein-PII]-L-tyrosine + UMP + H(+). Uridylyltransferase (UTase) activity is inhibited by glutamine, while glutamine activates uridylyl-removing (UR) activity. Its function is as follows. Modifies, by uridylylation and deuridylylation, the PII regulatory proteins (GlnB and homologs), in response to the nitrogen status of the cell that GlnD senses through the glutamine level. Under low glutamine levels, catalyzes the conversion of the PII proteins and UTP to PII-UMP and PPi, while under higher glutamine levels, GlnD hydrolyzes PII-UMP to PII and UMP (deuridylylation). Thus, controls uridylylation state and activity of the PII proteins, and plays an important role in the regulation of nitrogen assimilation and metabolism. In Ralstonia nicotianae (strain ATCC BAA-1114 / GMI1000) (Ralstonia solanacearum), this protein is Bifunctional uridylyltransferase/uridylyl-removing enzyme.